A 359-amino-acid chain; its full sequence is Cytohesin-interacting protein (359 aa).

The 90-residue stretch at 77 to 166 (LVTVEKQDNE…LLTIETLNGT (90 aa)) folds into the PDZ domain. An interaction with CYTH1 region spans residues 166–188 (TMILKRTELEAKLQVLKQTLKQK). Residues 166 to 188 (TMILKRTELEAKLQVLKQTLKQK) are a coiled coil.

In terms of assembly, interacts with CYTH1 and SNX27. In terms of tissue distribution, expressed in lymph nodes, thymus, spleen, lung, peripheral blood leukocytes and bone marrow.

Its subcellular location is the cytoplasm. It localises to the early endosome. By its binding to cytohesin-1 (CYTH1), it modifies activation of ARFs by CYTH1 and its precise function may be to sequester CYTH1 in the cytoplasm. This chain is Cytohesin-interacting protein (CYTIP), found in Homo sapiens (Human).